The sequence spans 624 residues: tRNA uridine 5-carboxymethylaminomethyl modification enzyme MnmG (624 aa).

Residues 13–18 (GAGHAG), Val-125, and Ser-180 contribute to the FAD site. 272-286 (GPRYCPSIEDKVVKF) lines the NAD(+) pocket. Residue Gln-369 coordinates FAD.

The protein belongs to the MnmG family. In terms of assembly, homodimer. Heterotetramer of two MnmE and two MnmG subunits. Requires FAD as cofactor.

The protein resides in the cytoplasm. In terms of biological role, NAD-binding protein involved in the addition of a carboxymethylaminomethyl (cmnm) group at the wobble position (U34) of certain tRNAs, forming tRNA-cmnm(5)s(2)U34. This is tRNA uridine 5-carboxymethylaminomethyl modification enzyme MnmG from Thermodesulfovibrio yellowstonii (strain ATCC 51303 / DSM 11347 / YP87).